The following is a 359-amino-acid chain: E3 ubiquitin-protein ligase RNF146 (359 aa).

The segment at 38–76 (CAICLQTCVHPVSLPCKHVFCYLCVKGASWLGKRCALCR) adopts an RING-type zinc-finger fold. Residues Lys86 and Lys96 each participate in a glycyl lysine isopeptide (Lys-Gly) (interchain with G-Cter in ubiquitin) cross-link. The WWE domain occupies 93 to 169 (EELKAASRGN…EHGRRRKIKR (77 aa)). A glycoprotein contacts are provided by Tyr109, Arg112, and Trp116. Residue Lys132 forms a Glycyl lysine isopeptide (Lys-Gly) (interchain with G-Cter in ubiquitin) linkage. Tyr146, Gln155, Arg165, and Lys177 together coordinate a glycoprotein. A Glycyl lysine isopeptide (Lys-Gly) (interchain with G-Cter in ubiquitin) cross-link involves residue Lys177. Disordered stretches follow at residues 197-243 (SSAD…DAGI) and 261-359 (ERSH…VTEV). Residues 199-212 (ADGADSGSAQTGAS) are compositionally biased toward low complexity. The span at 217–235 (VPSSTRPLTSVDGQLTSPV) shows a compositional bias: polar residues. Positions 284-298 (SVEETESDASSDSED) are enriched in acidic residues. Residues Ser290 and Ser294 each carry the phosphoserine modification. Positions 306-324 (HSLTQQRPLVPNGNQTVAD) are enriched in polar residues.

In terms of assembly, can form homooligomers. Interacts with PARsylated AXIN1, AXIN2, BLZF1, CASC3, H1-2, IPO7, LIG3, NCL, PARP1, XRCC1, XRCC5 and XRCC6. Interacts with DDB1, DHX15, IQGAP1, LRPPRC, PARP2, PRKDC, RUVBL2, TNKS1 and TNKS2. Binding often leads to interactor ubiquitination, in the presence of the appropriate E1 and E2 enzymes, and proteasomal degradation. In terms of processing, ubiquitinated; autoubiquitinated. Autoubiquitination is enhanced upon PAR-binding. In terms of tissue distribution, expressed at relatively high levels in the brain. Also present in spleen, heart, kidney, testis and liver. In the brain, expressed in the cerebellum, hippocampus, striatum, cortex, frontal cortex and, at lowest levels, in olfactory bulb (at protein level). Predominantly expressed in neurons.

It localises to the cytoplasm. It is found in the cytosol. The protein localises to the nucleus. It catalyses the reaction S-ubiquitinyl-[E2 ubiquitin-conjugating enzyme]-L-cysteine + [acceptor protein]-L-lysine = [E2 ubiquitin-conjugating enzyme]-L-cysteine + N(6)-ubiquitinyl-[acceptor protein]-L-lysine.. It functions in the pathway protein modification; protein ubiquitination. Its function is as follows. E3 ubiquitin-protein ligase that specifically binds poly-ADP-ribosylated (PARsylated) proteins and mediates their ubiquitination and subsequent degradation. May regulate many important biological processes, such as cell survival and DNA damage response. Acts as an activator of the Wnt signaling pathway by mediating the ubiquitination of PARsylated AXIN1 and AXIN2, 2 key components of the beta-catenin destruction complex. Acts in cooperation with tankyrase proteins (TNKS and TNKS2), which mediate PARsylation of target proteins AXIN1, AXIN2, BLZF1, CASC3, TNKS and TNKS2. Recognizes and binds tankyrase-dependent PARsylated proteins via its WWE domain and mediates their ubiquitination, leading to their degradation. Different ubiquitin linkage types have been observed: TNKS2 undergoes ubiquitination at 'Lys-48' and 'Lys-63', while AXIN1 is only ubiquitinated at 'Lys-48'. May regulate TNKS and TNKS2 subcellular location, preventing aggregation at a centrosomal location. Neuroprotective protein. Protects the brain against N-methyl-D-aspartate (NMDA) receptor-mediated glutamate excitotoxicity and ischemia, by interfering with PAR-induced cell death, called parthanatos. Prevents nuclear translocation of AIFM1 in a PAR-binding dependent manner. Does not affect PARP1 activation. Protects against cell death induced by DNA damaging agents, such as N-methyl-N-nitro-N-nitrosoguanidine (MNNG) and rescues cells from G1 arrest. Promotes cell survival after gamma-irradiation. Facilitates DNA repair. The polypeptide is E3 ubiquitin-protein ligase RNF146 (Rnf146) (Mus musculus (Mouse)).